Reading from the N-terminus, the 85-residue chain is Small ribosomal subunit protein bS20 (85 aa).

The protein belongs to the bacterial ribosomal protein bS20 family.

Binds directly to 16S ribosomal RNA. The protein is Small ribosomal subunit protein bS20 of Lactobacillus johnsonii (strain CNCM I-12250 / La1 / NCC 533).